We begin with the raw amino-acid sequence, 503 residues long: Surface lipoprotein assembly modifier (503 aa).

Residues 1-34 (MTITPVYTTFTPTKTPIKFFMAGLTFLIAHISHA) form the signal peptide. Residues 38–220 (RTDNQEPINQ…QYRQALKQRD (183 aa)) form an N-terminal domain region. The TPR repeat unit spans residues 136–169 (ILLGYANALAALDKGNAKKAIDELRRIIAIMPEY). Positions 221 to 503 (SWTWQVGMNL…QMFVEFSRIF (283 aa)) are C-terminal probable beta barrel. 14 consecutive transmembrane segments (beta stranded) span residues 222 to 232 (WTWQVGMNLAK), 259 to 270 (LSYQLGADKKWS), 275 to 285 (AYVGANAQIYG), 299 to 308 (GRLGANLGFA), 313 to 322 (DLSIETYGEK), 334 to 343 (IGIRMSVDYR), 348 to 358 (FQSLNAIDISR), 372 to 382 (TLYSTSLIYYP), 387 to 396 (YYLLGADFYD), 410 to 419 (RGIRTAWGQE), 424 to 434 (LSSRAQISINK), 454 to 463 (MQASLSLWHR), 470 to 479 (ITPRLTISTN), and 493 to 503 (NQMFVEFSRIF).

Belongs to the Slam family.

It localises to the cell outer membrane. Its function is as follows. Required for correct export to the cell surface of some cell outer membrane lipoproteins (tested with TpbP) upon heterologous expression in E.coli and probably also in Moraxella. In Moraxella catarrhalis (Branhamella catarrhalis), this protein is Surface lipoprotein assembly modifier.